The sequence spans 321 residues: Glucokinase (321 aa).

8–13 contacts ATP; it reads GDVGGT.

It belongs to the bacterial glucokinase family.

It is found in the cytoplasm. It carries out the reaction D-glucose + ATP = D-glucose 6-phosphate + ADP + H(+). This chain is Glucokinase, found in Pectobacterium atrosepticum (strain SCRI 1043 / ATCC BAA-672) (Erwinia carotovora subsp. atroseptica).